A 217-amino-acid chain; its full sequence is 25 kDa ookinete surface antigen (217 aa).

A signal peptide spans 1-16; the sequence is MNKLYSLFLFLFIQLS. Residues 30–59 form the EGF-like 1; truncated domain; sequence CKKGFLIQMSGHLECKCENDLVLVNEETCE. EGF-like domains lie at 61-106, 106-150, and 153-193; these read KVLK…NVCI, ILNE…NKCS, and GETK…STCT. Cystine bridges form between C65–C80, C74–C92, C94–C105, C110–C120, C115–C133, C135–C149, C157–C168, C161–C177, and C179–C192. A glycan (N-linked (GlcNAc...) asparagine) is linked at N112. Residues N165 and N187 are each glycosylated (N-linked (GlcNAc...) asparagine). S196 carries the GPI-anchor amidated serine lipid modification. The propeptide at 197–217 is removed in mature form; that stretch reads VYNILNLSLIFVLFSVCFFIM. A glycan (N-linked (GlcNAc...) asparagine) is linked at N202.

It localises to the cell membrane. The protein is 25 kDa ookinete surface antigen of Plasmodium reichenowi.